Consider the following 411-residue polypeptide: Probable phosphatase HAD1 (411 aa).

Positions 14–23 (LPSPNTSQPP) are enriched in polar residues. The segment at 14–33 (LPSPNTSQPPSAAPSRRGSF) is disordered. Aspartate 61 functions as the Nucleophile in the catalytic mechanism. Mg(2+) contacts are provided by aspartate 61, aspartate 63, and aspartate 338. Residue aspartate 63 is the Proton donor of the active site. Positions 296–386 (PRPTPDVTPV…QSGQAGVTLD (91 aa)) are disordered. Residues 326 to 345 (VRNTQTIMKGSDDLTGNDSV) are compositionally biased toward polar residues. A compositionally biased stretch (basic and acidic residues) spans 362-373 (SVEKRAEMEFHR).

It belongs to the HAD-like hydrolase superfamily. Phosphorylated.

Functionally, probable phosphatase. Required for cell wall integrity and virulence. This chain is Probable phosphatase HAD1, found in Cryptococcus neoformans var. grubii serotype A (strain H99 / ATCC 208821 / CBS 10515 / FGSC 9487) (Filobasidiella neoformans var. grubii).